The primary structure comprises 159 residues: Ribosomal RNA large subunit methyltransferase H (159 aa).

S-adenosyl-L-methionine-binding positions include leucine 76, glycine 108, and 127-132; that span reads FSPMTF.

The protein belongs to the RNA methyltransferase RlmH family. In terms of assembly, homodimer.

The protein localises to the cytoplasm. It catalyses the reaction pseudouridine(1915) in 23S rRNA + S-adenosyl-L-methionine = N(3)-methylpseudouridine(1915) in 23S rRNA + S-adenosyl-L-homocysteine + H(+). In terms of biological role, specifically methylates the pseudouridine at position 1915 (m3Psi1915) in 23S rRNA. This chain is Ribosomal RNA large subunit methyltransferase H, found in Alkaliphilus metalliredigens (strain QYMF).